Here is a 423-residue protein sequence, read N- to C-terminus: Core protease OPG082 (423 aa).

Residues histidine 241, aspartate 248, and cysteine 328 contribute to the active site.

This sequence belongs to the peptidase C57 family.

It is found in the virion. In terms of biological role, late protein responsible for processing most or all of the viral core and membrane proteins known to undergo morphogenesis-associated proteolysis. These proteolytic events are involved in the transformation of immature virions (IV) into mature virions (MV). Probably cleaves at least the OPG129, OPG136, OPG098, and OPG144 precursors preferentially at Ala-Gly-|-Ala motifs. Also seems to process Ala-Gly-|-Ser and Ala-Gly-|-Thr motifs. In Homo sapiens (Human), this protein is Core protease OPG082 (OPG083).